The chain runs to 159 residues: Ribosomal RNA large subunit methyltransferase H (159 aa).

S-adenosyl-L-methionine-binding positions include Leu76, Gly108, and 127 to 132; that span reads FGLLTL.

The protein belongs to the RNA methyltransferase RlmH family. In terms of assembly, homodimer.

Its subcellular location is the cytoplasm. The catalysed reaction is pseudouridine(1915) in 23S rRNA + S-adenosyl-L-methionine = N(3)-methylpseudouridine(1915) in 23S rRNA + S-adenosyl-L-homocysteine + H(+). Specifically methylates the pseudouridine at position 1915 (m3Psi1915) in 23S rRNA. This chain is Ribosomal RNA large subunit methyltransferase H, found in Streptococcus equi subsp. zooepidemicus (strain MGCS10565).